The chain runs to 289 residues: Acetyl-coenzyme A carboxylase carboxyl transferase subunit beta (289 aa).

A CoA carboxyltransferase N-terminal domain is found at 27-289 (LWSKCPSCES…SFMRVPAGAA (263 aa)). Positions 31, 34, 50, and 53 each coordinate Zn(2+). A C4-type zinc finger spans residues 31-53 (CPSCESVLYRTDLESNSEVCPKC).

The protein belongs to the AccD/PCCB family. In terms of assembly, acetyl-CoA carboxylase is a heterohexamer composed of biotin carboxyl carrier protein (AccB), biotin carboxylase (AccC) and two subunits each of ACCase subunit alpha (AccA) and ACCase subunit beta (AccD). The cofactor is Zn(2+).

The protein resides in the cytoplasm. It catalyses the reaction N(6)-carboxybiotinyl-L-lysyl-[protein] + acetyl-CoA = N(6)-biotinyl-L-lysyl-[protein] + malonyl-CoA. Its pathway is lipid metabolism; malonyl-CoA biosynthesis; malonyl-CoA from acetyl-CoA: step 1/1. In terms of biological role, component of the acetyl coenzyme A carboxylase (ACC) complex. Biotin carboxylase (BC) catalyzes the carboxylation of biotin on its carrier protein (BCCP) and then the CO(2) group is transferred by the transcarboxylase to acetyl-CoA to form malonyl-CoA. The polypeptide is Acetyl-coenzyme A carboxylase carboxyl transferase subunit beta (Methylobacillus flagellatus (strain ATCC 51484 / DSM 6875 / VKM B-1610 / KT)).